The sequence spans 118 residues: Small ribosomal subunit protein uS13 (118 aa).

A disordered region spans residues 95-118 (LPLRGQRTRTNARTRKGPRKAIKK).

This sequence belongs to the universal ribosomal protein uS13 family. As to quaternary structure, part of the 30S ribosomal subunit. Forms a loose heterodimer with protein S19. Forms two bridges to the 50S subunit in the 70S ribosome.

Located at the top of the head of the 30S subunit, it contacts several helices of the 16S rRNA. In the 70S ribosome it contacts the 23S rRNA (bridge B1a) and protein L5 of the 50S subunit (bridge B1b), connecting the 2 subunits; these bridges are implicated in subunit movement. Contacts the tRNAs in the A and P-sites. This is Small ribosomal subunit protein uS13 from Xylella fastidiosa (strain 9a5c).